A 288-amino-acid chain; its full sequence is Undecaprenyl-diphosphatase (288 aa).

The next 8 helical transmembrane spans lie at 25-45 (GITE…NEFL), 53-73 (FIDM…MVIY), 93-113 (WKLW…GLLL), 121-141 (LSNF…FIWI), 171-191 (VLSI…GIIV), 196-216 (SVAA…YSGL), 231-251 (GQAA…LFVI), and 263-283 (FTVF…YGAV).

The protein belongs to the UppP family.

It is found in the cell membrane. It carries out the reaction di-trans,octa-cis-undecaprenyl diphosphate + H2O = di-trans,octa-cis-undecaprenyl phosphate + phosphate + H(+). In terms of biological role, catalyzes the dephosphorylation of undecaprenyl diphosphate (UPP). Confers resistance to bacitracin. In Streptococcus thermophilus (strain CNRZ 1066), this protein is Undecaprenyl-diphosphatase.